Here is a 593-residue protein sequence, read N- to C-terminus: Multidrug resistance-like ATP-binding protein MdlB (593 aa).

Residues 1-25 (MRSFSQLWPTLKRLLAYGSPWRKPL) are Cytoplasmic-facing. An ABC transmembrane type-1 domain is found at 25 to 310 (LGIAVLMMWV…LTTQQAMLQQ (286 aa)). The chain crosses the membrane as a helical span at residues 26–46 (GIAVLMMWVAAAAEVSGPLLI). At 47-62 (SYFIDNMVAKNNLPLK) the chain is on the periplasmic side. The helical transmembrane segment at 63 to 83 (VVAGLAAAYVGLQLFAAGLHY) threads the bilayer. At 84–140 (AQSLLFNRAAVGVVQQLRTDVMDAALRQPLSEFDTQPVGQVISRVTNDTEVIRDLYV) the chain is on the cytoplasmic side. The chain crosses the membrane as a helical span at residues 141 to 161 (TVVATVLRSAALVGAMLVAMF). Residues 162 to 164 (SLD) lie on the Periplasmic side of the membrane. The helical transmembrane segment at 165-185 (WRMALVAIMIFPVVLVVMVIY) threads the bilayer. Over 186–254 (QRYSTPIVRR…LRLDGFLLRP (69 aa)) the chain is Cytoplasmic. A helical transmembrane segment spans residues 255-275 (LLSLFSSLILCGLLMLFGFSA). The Periplasmic portion of the chain corresponds to 276-278 (SGT). A helical membrane pass occupies residues 279–299 (IEVGVLYAFISYLGRLNEPLI). Residues 300–593 (ELTTQQAMLQ…SVREEESLSA (294 aa)) lie on the Cytoplasmic side of the membrane. One can recognise an ABC transporter domain in the interval 341–574 (IEVDNVSFAY…QGRYWQMYQL (234 aa)). 374 to 381 (GHTGSGKS) contributes to the ATP binding site.

The protein belongs to the ABC transporter superfamily. Drug exporter-2 (TC 3.A.1.117) family.

The protein localises to the cell inner membrane. The enzyme catalyses ATP + H2O + xenobioticSide 1 = ADP + phosphate + xenobioticSide 2.. This chain is Multidrug resistance-like ATP-binding protein MdlB (mdlB), found in Escherichia coli O6:H1 (strain CFT073 / ATCC 700928 / UPEC).